The chain runs to 1077 residues: Teashirt homolog 1 (1077 aa).

3 disordered regions span residues 1–109 (MPRR…VSYP), 139–195 (SGST…SSSS), and 269–298 (GHYR…MEME). Residues 26-36 (IDEEHVEDDGL) are compositionally biased toward acidic residues. Composition is skewed to polar residues over residues 57–71 (QSYQ…TNQD) and 139–152 (SGST…SQKE). The span at 164 to 195 (PVSTTGPTTSTPSTSCSSSTSHSSTTSTSSSS) shows a compositional bias: low complexity. 2 consecutive C2H2-type zinc fingers follow at residues 246–270 (FRCK…ETGH) and 307–331 (LKCM…KTKH). Positions 269–284 (GHYRDDNRDKDSEKTK) are enriched in basic and acidic residues. Residues 416–440 (LKCMECGSSHDTLQQLTAHMMVTGH) form a C2H2-type 3; atypical zinc finger. Disordered regions lie at residues 467 to 549 (SIPL…KGGL) and 647 to 720 (TGKV…EPLK). Composition is skewed to basic and acidic residues over residues 496 to 528 (SEEK…EKFE), 647 to 665 (TGKV…EKSS), and 675 to 708 (KENK…EGPL). Position 765 is a phosphoserine (serine 765). The segment at 848 to 873 (TGRLTPKSSTPSTVSEKSDADGSSFE) is disordered. Residues 853–862 (PKSSTPSTVS) show a composition bias toward polar residues. The segment at residues 885 to 955 (RKGRQSNWNP…NVKYQLRRTG (71 aa)) is a DNA-binding region (homeobox; atypical). 2 consecutive C2H2-type zinc fingers follow at residues 970 to 992 (FFCN…LETH) and 1037 to 1060 (FQCK…SKTH).

The protein belongs to the teashirt C2H2-type zinc-finger protein family. Interacts (via homeobox domain) with APBB1 (via PID domain 1). In terms of tissue distribution, expressed in brain; strongly reduced in post-mortem elderly subjects with Alzheimer disease.

Its subcellular location is the nucleus. Functionally, probable transcriptional regulator involved in developmental processes. May act as a transcriptional repressor (Potential). This is Teashirt homolog 1 (TSHZ1) from Homo sapiens (Human).